Here is a 1835-residue protein sequence, read N- to C-terminus: Protein TIC 214 (1835 aa).

The next 6 helical transmembrane spans lie at 25–45 (VGLY…LFLL), 64–84 (FITG…HLAL), 87–107 (PHTI…WNNH), 124–144 (LSIQ…HFIL), 172–192 (VGWL…LFWI), and 221–241 (IFSI…PSPI). The span at 246–258 (LKETSETEERGES) shows a compositional bias: basic and acidic residues. Disordered stretches follow at residues 246 to 304 (LKET…DGNQ), 735 to 759 (EFKT…KKEE), and 1535 to 1578 (NRNQ…KRQS). A compositionally biased stretch (acidic residues) spans 259 to 268 (AEETDVEIET). The span at 1553–1569 (PRNRQKDLEKDYAESDI) shows a compositional bias: basic and acidic residues.

This sequence belongs to the TIC214 family. Part of the Tic complex.

It localises to the plastid. The protein localises to the chloroplast inner membrane. Its function is as follows. Involved in protein precursor import into chloroplasts. May be part of an intermediate translocation complex acting as a protein-conducting channel at the inner envelope. In Liriodendron tulipifera (Tuliptree), this protein is Protein TIC 214.